A 74-amino-acid chain; its full sequence is Large ribosomal subunit protein bL31 (74 aa).

Zn(2+)-binding residues include Cys-17, Cys-19, Cys-38, and Cys-41.

The protein belongs to the bacterial ribosomal protein bL31 family. Type A subfamily. As to quaternary structure, part of the 50S ribosomal subunit. It depends on Zn(2+) as a cofactor.

Functionally, binds the 23S rRNA. The polypeptide is Large ribosomal subunit protein bL31 (Gloeobacter violaceus (strain ATCC 29082 / PCC 7421)).